The primary structure comprises 143 residues: UPF0260 protein plu2141 (143 aa).

Belongs to the UPF0260 family.

The sequence is that of UPF0260 protein plu2141 from Photorhabdus laumondii subsp. laumondii (strain DSM 15139 / CIP 105565 / TT01) (Photorhabdus luminescens subsp. laumondii).